Consider the following 478-residue polypeptide: MNFLGFGQSADIEIVFDGAEHKTAEVKGEDGKVEKMLLFYDGETVSGKVNVTLKKPGSKLEHQGIKIEFIGQIELYYDRGNHHEFKCLAKALARPGDLIQNNSYPFDFPKVEKQFEVYAGSNVRLRYFLRATIVRRISDITKEVDIAVHTLCSYPEMNNPIKMEVGIEDCLHIEFEYNKSKYHLRDTIIGKIYFLLVRIKIKHMEIAIIKKESTGTGPTMFNENETIAKYEIMDGAPVKGESIPIRVFLAGYNLTPTMRDINKKFSVKYFLNLVLMDTEDRRYFKQQEITLWRKADKPRYHGAQQHQQQQHQHVPLHAPPHLVSGPAAPTVAHSLISSSTDSGEVGGAPTAPGTAGSESKMGLFTRESPNQEFSQQQMDSPPLTPTPSTASVAVAVPTAASSVSEPAPERGIGDGAAAATTSASPVAMLSSSPPPLLPVSPLSRSETEASEQVQPEDEDLDAITPNTKKTGATPLATD.

The interval proline 298–aspartate 478 is disordered. Composition is skewed to low complexity over residues alanine 303–valine 323 and glycine 347–glycine 356. Over residues glutamate 367 to aspartate 379 the composition is skewed to polar residues. Composition is skewed to low complexity over residues threonine 386–proline 406 and alanine 416–serine 431.

This sequence belongs to the VPS26 family. In terms of assembly, component of the retromer complex, composed of Vps26 and Vps35.

It localises to the cytoplasm. The protein resides in the membrane. Component of the retromer complex which acts in conjunction with wingless (wg) and clathrin-mediated endocytosis to sustain a wntless (wls) traffic loop. This loop encompasses the Golgi, the cell surface, an endocytic compartment and a retrograde route leading back to the Golgi, thereby enabling wls to direct wg secretion. The hh and dpp signaling pathways do not require the retromer complex suggesting that it does not play a general role in exocytosis. This Drosophila melanogaster (Fruit fly) protein is Vacuolar protein sorting-associated protein 26 (Vps26).